The following is a 209-amino-acid chain: Thymidine kinase (209 aa).

Residues 16–23 and 90–93 each bind ATP; these read GPMFAGKT and DESQ. Glu-91 functions as the Proton acceptor in the catalytic mechanism.

Belongs to the thymidine kinase family. As to quaternary structure, homotetramer.

It is found in the cytoplasm. The enzyme catalyses thymidine + ATP = dTMP + ADP + H(+). This Aster yellows witches'-broom phytoplasma (strain AYWB) protein is Thymidine kinase.